A 292-amino-acid polypeptide reads, in one-letter code: Probable 2-(5''-triphosphoribosyl)-3'-dephosphocoenzyme-A synthase (292 aa).

This sequence belongs to the CitG/MdcB family.

It catalyses the reaction 3'-dephospho-CoA + ATP = 2'-(5''-triphospho-alpha-D-ribosyl)-3'-dephospho-CoA + adenine. Involved in the formation of 2-(5''-phosphoribosyl)-3'-dephosphocoenzyme-A, the prosthetic group of the acyl-carrier protein of the malonate decarboxylase. This chain is Probable 2-(5''-triphosphoribosyl)-3'-dephosphocoenzyme-A synthase, found in Azotobacter vinelandii (strain DJ / ATCC BAA-1303).